Consider the following 294-residue polypeptide: Cytidine deaminase (294 aa).

CMP/dCMP-type deaminase domains lie at 48–168 (DEDA…FGPK) and 186–294 (LTGD…VLLG). Position 89–91 (89–91 (NME)) interacts with substrate. Residue His-102 coordinates Zn(2+). Glu-104 acts as the Proton donor in catalysis. Cys-129 and Cys-132 together coordinate Zn(2+).

The protein belongs to the cytidine and deoxycytidylate deaminase family. As to quaternary structure, homodimer. Zn(2+) is required as a cofactor.

The catalysed reaction is cytidine + H2O + H(+) = uridine + NH4(+). The enzyme catalyses 2'-deoxycytidine + H2O + H(+) = 2'-deoxyuridine + NH4(+). Its function is as follows. This enzyme scavenges exogenous and endogenous cytidine and 2'-deoxycytidine for UMP synthesis. The chain is Cytidine deaminase from Salmonella newport (strain SL254).